Here is a 578-residue protein sequence, read N- to C-terminus: MNDAVITLNGLEKRFPGMDKPAVAPLDCTIHAGYVTGLVGPDGAGKTTLMRMLAGLLKPDSGSATVIGFDPIKNDGALHAVLGYMPQKFGLYEDLTVMENLNLYADLRSVTGEARKQTFARLLEFTSLGPFTGRLAGKLSGGMKQKLGLACTLVGEPKVLLLDEPGVGVDPISRRELWQMVHELAGEGMLILWSTSYLDEAEQCRDVLLMNEGELLYQGEPKALTQTMAGRSFLMTSPHEGNRKLLQRALKLPQVSDGMIQGKSVRLILKKEATPDDIRHADGMPEININETTPRFEDAFIDLLGGAGTSESPLGAILHTVEGTPGETVIEAKELTKKFGDFAATDHVNFAVKRGEIFGLLGPNGAGKSTTFKMMCGLLVPTSGQALVLGMDLKESSGKARQHLGYMAQKFSLYGNLTVEQNLRFFSGVYGLRGRAQNEKISRMSEAFGLKSIASHATDELPLGFKQRLALACSLMHEPDILFLDEPTSGVDPLTRREFWLHINSMVEKGVTVMVTTHFMDEAEYCDRIGLVYRGKLIASGTPDDLKAQSANDEQPDPTMEQAFIQLIHDWDKEHSNE.

2 consecutive ABC transporter domains span residues 6-237 (ITLN…LMTS) and 330-559 (IEAK…PDPT). ATP-binding positions include 40–47 (GPDGAGKT) and 362–369 (GPNGAGKS).

Belongs to the ABC transporter superfamily. In terms of assembly, the complex is probably composed of two ATP-binding proteins (YbhF) and two transmembrane proteins (YbhR and YbhS).

Its function is as follows. Part of the ABC transporter complex YbhFSR that could be involved in efflux of cefoperazone. Probably responsible for energy coupling to the transport system. This chain is Probable multidrug ABC transporter ATP-binding protein YbhF (ybhF), found in Escherichia coli (strain K12).